We begin with the raw amino-acid sequence, 156 residues long: Small ribosomal subunit protein uS7 (156 aa).

This sequence belongs to the universal ribosomal protein uS7 family. Part of the 30S ribosomal subunit. Contacts proteins S9 and S11.

Functionally, one of the primary rRNA binding proteins, it binds directly to 16S rRNA where it nucleates assembly of the head domain of the 30S subunit. Is located at the subunit interface close to the decoding center, probably blocks exit of the E-site tRNA. The polypeptide is Small ribosomal subunit protein uS7 (Ralstonia nicotianae (strain ATCC BAA-1114 / GMI1000) (Ralstonia solanacearum)).